Here is a 254-residue protein sequence, read N- to C-terminus: 5-oxoprolinase subunit A (254 aa).

It belongs to the LamB/PxpA family. As to quaternary structure, forms a complex composed of PxpA, PxpB and PxpC.

It catalyses the reaction 5-oxo-L-proline + ATP + 2 H2O = L-glutamate + ADP + phosphate + H(+). In terms of biological role, catalyzes the cleavage of 5-oxoproline to form L-glutamate coupled to the hydrolysis of ATP to ADP and inorganic phosphate. The protein is 5-oxoprolinase subunit A of Burkholderia thailandensis (strain ATCC 700388 / DSM 13276 / CCUG 48851 / CIP 106301 / E264).